The following is a 258-amino-acid chain: Isoprenyl transferase (258 aa).

Residue Asp-38 is part of the active site. Mg(2+) is bound at residue Asp-38. Substrate-binding positions include 39–42 (GNGR), Trp-43, Arg-51, His-55, and 83–85 (STE). The active-site Proton acceptor is Asn-86. Residues Trp-87, Arg-89, Arg-206, and 212–214 (RIS) each bind substrate. Glu-225 lines the Mg(2+) pocket.

The protein belongs to the UPP synthase family. In terms of assembly, homodimer. It depends on Mg(2+) as a cofactor.

Functionally, catalyzes the condensation of isopentenyl diphosphate (IPP) with allylic pyrophosphates generating different type of terpenoids. This chain is Isoprenyl transferase, found in Bacillus cereus (strain ATCC 14579 / DSM 31 / CCUG 7414 / JCM 2152 / NBRC 15305 / NCIMB 9373 / NCTC 2599 / NRRL B-3711).